We begin with the raw amino-acid sequence, 365 residues long: Flagellar P-ring protein (365 aa).

The signal sequence occupies residues 1 to 19; the sequence is MIKFLSALILLLVTTAAQA.

This sequence belongs to the FlgI family. The basal body constitutes a major portion of the flagellar organelle and consists of four rings (L,P,S, and M) mounted on a central rod.

It is found in the periplasm. The protein localises to the bacterial flagellum basal body. Assembles around the rod to form the L-ring and probably protects the motor/basal body from shearing forces during rotation. This is Flagellar P-ring protein from Shigella flexneri serotype 5b (strain 8401).